The chain runs to 628 residues: E3 SUMO-protein ligase PIAS3 (628 aa).

Residues 1-200 (MAELGELKHM…QLRFCLCETS (200 aa)) are interaction with CCAR2. The SAP domain maps to 11-45 (VMSFRVSELQVLLGFAGRNKSGRKHELLAKALHLL). Residues 19–23 (LQVLL) carry the LXXLL motif motif. Residues lysine 46, lysine 56, lysine 230, and lysine 307 each participate in a glycyl lysine isopeptide (Lys-Gly) (interchain with G-Cter in SUMO2) cross-link. The 166-residue stretch at 115-280 (MHPPLPQPVH…SLSVYLVRQL (166 aa)) folds into the PINIT domain. The segment at 312 to 393 (PDSEVATTSL…FMEILSSCSD (82 aa)) adopts an SP-RING-type zinc-finger fold. Zn(2+) is bound by residues cysteine 343, histidine 345, cysteine 366, and cysteine 369. Residues 450 to 460 (LTIESSSDEED) form an SUMO1-binding region. Residues lysine 466 and lysine 482 each participate in a glycyl lysine isopeptide (Lys-Gly) (interchain with G-Cter in SUMO2) cross-link. Residues 597–617 (VAPGGALREGHGGPLPSGPSL) are disordered.

The protein belongs to the PIAS family. Monomer. Binds SUMO1 and UBE2I. Interacts with BCL11A, HMGA2, IRF1, MITF and NCOA2. Interacts with STAT5; the interaction occurs on stimulation by PRL. Interacts with GFI1; the interaction relieves the inhibitory effect of PIAS3 on STAT3-mediated transcriptional activity. Interacts with AR, PLAG1 and ZFHX3. Interacts with STAT3; the interaction occurs on stimulation by IL6, CNTF or OSM and inhibits the DNA binding activity of STAT3. Interacts with MTA1. Interacts with CCAR2 (via N-terminus). Interacts with TRIM8. Interacts with PRDM1/Blimp-1. In terms of processing, sumoylated. In terms of tissue distribution, widely expressed.

The protein resides in the cytoplasm. It is found in the nucleus. It localises to the nucleus speckle. The protein operates within protein modification; protein sumoylation. Its function is as follows. Functions as an E3-type small ubiquitin-like modifier (SUMO) ligase, stabilizing the interaction between UBE2I and the substrate, and as a SUMO-tethering factor. Plays a crucial role as a transcriptional coregulation in various cellular pathways, including the STAT pathway and the steroid hormone signaling pathway. Involved in regulating STAT3 signaling via inhibiting STAT3 DNA-binding and suppressing cell growth. Enhances the sumoylation of MTA1 and may participate in its paralog-selective sumoylation. Sumoylates CCAR2 which promotes its interaction with SIRT1. Diminishes the sumoylation of ZFHX3 by preventing the colocalization of ZFHX3 with SUMO1 in the nucleus. The polypeptide is E3 SUMO-protein ligase PIAS3 (PIAS3) (Homo sapiens (Human)).